The chain runs to 189 residues: Protein GrpE (189 aa).

Residues 1-13 (MSENKQPEQNQDL) are compositionally biased toward polar residues. Residues 1–35 (MSENKQPEQNQDLTGEPSPEELEAAQAADEFDAMN) form a disordered region.

The protein belongs to the GrpE family. As to quaternary structure, homodimer.

The protein localises to the cytoplasm. Its function is as follows. Participates actively in the response to hyperosmotic and heat shock by preventing the aggregation of stress-denatured proteins, in association with DnaK and GrpE. It is the nucleotide exchange factor for DnaK and may function as a thermosensor. Unfolded proteins bind initially to DnaJ; upon interaction with the DnaJ-bound protein, DnaK hydrolyzes its bound ATP, resulting in the formation of a stable complex. GrpE releases ADP from DnaK; ATP binding to DnaK triggers the release of the substrate protein, thus completing the reaction cycle. Several rounds of ATP-dependent interactions between DnaJ, DnaK and GrpE are required for fully efficient folding. The polypeptide is Protein GrpE (Polaromonas naphthalenivorans (strain CJ2)).